The sequence spans 347 residues: Protein NDL3 (347 aa).

It belongs to the NDRG family. As to quaternary structure, interacts with the heterodimers formed by GB1 and GG1, or GB1 and GG2. Interacts with RGS1.

The protein resides in the cytoplasm. Its function is as follows. Involved in a signaling pathway that modulates root auxin transport and auxin gradients. Acts partially by positively regulating the auxin carrier PIN2 and AUX1. Acts, together with GB1 as positive regulator of meristem initiation and branching. GB1 and NDL3 positively regulate basipetal inflorescence auxin transport and modulate MAX2 expression in shoots, which regulates organ and lateral meristem formation by the establishment and maintenance of auxin gradients. This is Protein NDL3 from Arabidopsis thaliana (Mouse-ear cress).